The following is a 417-amino-acid chain: Phosphoglycerate kinase 1 (417 aa).

Ser-2 is modified (N-acetylserine). Phosphoserine is present on residues Ser-2 and Ser-4. Lys-6 carries the post-translational modification N6-succinyllysine. Residue Lys-11 is modified to N6-acetyllysine. The (2R)-3-phosphoglycerate site is built by Val-23, Asp-24, Phe-25, Asn-26, Gln-38, and Arg-39. Residues 38–43 are mitochondrial targeting region exposed following cis-trans isomerization by PIN1 and recognized by the TOM complex for mitochondrial translocation of the protein; it reads QRIKAA. At Lys-48 the chain carries N6-acetyllysine; alternate. Position 48 is an N6-succinyllysine; alternate (Lys-48). Ser-62, His-63, Gly-65, and Arg-66 together coordinate (2R)-3-phosphoglycerate. Lys-75 is modified (N6-acetyllysine). Tyr-76 carries the phosphotyrosine modification. 2 positions are modified to N6-acetyllysine: Lys-86 and Lys-91. At Lys-97 the chain carries N6-acetyllysine; alternate. Lys-97 bears the N6-(2-hydroxyisobutyryl)lysine; alternate mark. Leu-122 and Arg-123 together coordinate (2R)-3-phosphoglycerate. Lys-131 is subject to N6-acetyllysine; alternate. Position 131 is an N6-malonyllysine; alternate (Lys-131). N6-acetyllysine is present on Lys-146. (2R)-3-phosphoglycerate contacts are provided by His-170 and Arg-171. Lys-191 carries the N6-succinyllysine modification. Tyr-196 is modified (phosphotyrosine). An N6-acetyllysine modification is found at Lys-199. Ser-203 bears the Phosphoserine mark. Gly-214 provides a ligand contact to ADP. Gly-214 contacts CDP. AMP is bound by residues Ala-215 and Lys-216. Ala-215 contacts ATP. Mg(2+) is bound at residue Ala-215. The residue at position 216 (Lys-216) is an N6-(2-hydroxyisobutyryl)lysine. Mg(2+) contacts are provided by Ala-218 and Asp-219. Asp-219 provides a ligand contact to CDP. Position 220 (Lys-220) interacts with AMP. Lys-220 lines the ATP pocket. N6-(2-hydroxyisobutyryl)lysine is present on Lys-220. Gly-238 is a binding site for ADP. Gly-238 contacts CDP. Gly-239 provides a ligand contact to AMP. An ATP-binding site is contributed by Gly-239. An N6-acetyllysine mark is found at Lys-267 and Lys-291. Residue Gly-313 participates in AMP binding. Position 313 (Gly-313) interacts with ATP. Lys-323 is subject to N6-(2-hydroxyisobutyryl)lysine. CDP contacts are provided by Gly-338, Val-340, and Phe-343. An ADP-binding site is contributed by Phe-343. Glu-344 is a binding site for AMP. Glu-344 provides a ligand contact to ATP. Lys-361 carries the post-translational modification N6-acetyllysine. ATP contacts are provided by Asp-375 and Thr-376. Asp-375 is a binding site for Mg(2+).

The protein belongs to the phosphoglycerate kinase family. As to quaternary structure, monomer. Interacts with kinase MAPK1/ERK2; the interaction is direct, occurs under hypoxic conditions, and promotes its interaction with PIN1. Interacts with peptidyl-prolyl cis-trans isomerase PIN1; the interaction is direct, occurs under hypoxic conditions, and targets the protein to the mitochondrion by promoting interactions with the TOM complex. Interacts with mitochondrial circRNA mcPGK1 (via its 2nd stem-loop); the interaction is direct and targets the protein to the mitochondrion by promoting interactions with the TOM complex. Interacts with pyruvate dehydrogenase kinase PDK1; the interaction is direct, occurs under hypoxic conditions and leads to PDK1-mediated inhibition of pyruvate dehydrogenase complex activity. It depends on Mg(2+) as a cofactor. In terms of processing, phosphorylated at Ser-203 by MAPK1/ERK2 under hypoxic conditions, which promotes its mitochondrial targeting.

It localises to the cytoplasm. It is found in the cytosol. The protein localises to the mitochondrion matrix. The enzyme catalyses (2R)-3-phosphoglycerate + ATP = (2R)-3-phospho-glyceroyl phosphate + ADP. It carries out the reaction L-seryl-[protein] + ATP = O-phospho-L-seryl-[protein] + ADP + H(+). The protein operates within carbohydrate degradation; glycolysis; pyruvate from D-glyceraldehyde 3-phosphate: step 2/5. Catalyzes one of the two ATP producing reactions in the glycolytic pathway via the reversible conversion of 1,3-diphosphoglycerate to 3-phosphoglycerate. Both L- and D- forms of purine and pyrimidine nucleotides can be used as substrates, but the activity is much lower on pyrimidines. In addition to its role as a glycolytic enzyme, it seems that PGK-1 acts as a polymerase alpha cofactor protein (primer recognition protein). Acts as a protein kinase when localized to the mitochondrion where it phosphorylates pyruvate dehydrogenase kinase PDK1 to inhibit pyruvate dehydrogenase complex activity and suppress the formation of acetyl-coenzyme A from pyruvate, and consequently inhibit oxidative phosphorylation and promote glycolysis. May play a role in sperm motility. In Sus scrofa (Pig), this protein is Phosphoglycerate kinase 1 (PGK1).